The following is a 380-amino-acid chain: DNA replication and repair protein RecF (380 aa).

30 to 37 (GNNAQGKS) lines the ATP pocket.

Belongs to the RecF family.

It localises to the cytoplasm. In terms of biological role, the RecF protein is involved in DNA metabolism; it is required for DNA replication and normal SOS inducibility. RecF binds preferentially to single-stranded, linear DNA. It also seems to bind ATP. The chain is DNA replication and repair protein RecF from Crocosphaera subtropica (strain ATCC 51142 / BH68) (Cyanothece sp. (strain ATCC 51142)).